Reading from the N-terminus, the 284-residue chain is Efem/EfeO family lipoprotein (284 aa).

An N-terminal signal peptide occupies residues methionine 1–alanine 17. The N-palmitoyl cysteine moiety is linked to residue cysteine 18. The S-diacylglycerol cysteine moiety is linked to residue cysteine 18.

It belongs to the EfeM/EfeO family.

It localises to the cell membrane. The chain is Efem/EfeO family lipoprotein from Staphylococcus aureus (strain MSSA476).